The following is a 238-amino-acid chain: Thymidine kinase a (238 aa).

ATP is bound by residues 38 to 45, 70 to 72, and 115 to 118; these read GPMFSGKS, DTR, and DEAQ. The Proton acceptor role is filled by E116. Y147 serves as a coordination point for substrate. Positions 172 and 175 each coordinate Zn(2+). Substrate-binding positions include 191 to 195 and Y200; that span reads TELIG. Residue C204 participates in Zn(2+) binding.

Belongs to the thymidine kinase family. Monomer and dimer. Dimerization is stimulated by ATP. As to expression, expressed ubiquitously.

It is found in the cytoplasm. It carries out the reaction thymidine + ATP = dTMP + ADP + H(+). The protein operates within purine metabolism. Its pathway is pyrimidine metabolism. Functionally, part of the salvage pathway for purine and pyrimidine deoxyribonucleotide synthesis. Phosphorylates preferentially purines over pyrimidines. Mediates tolerance to genotoxins, such as ultraviolet-C (UV-C) irradiation, MMC, a DNA crosslinker, and ZEO, a DNA intercalator, that induce double-strand breaks and thus contributes to several DNA repair pathways by providing deoxythymidine triphosphate that serve as precursors for DNA repair and to balance deoxyribonucleotides pools. The protein is Thymidine kinase a of Arabidopsis thaliana (Mouse-ear cress).